Consider the following 382-residue polypeptide: MDNLFTFLHEIEDRYARTIFNFHLISCDEIGDIYGLMKERISSEDMFDNIVYNKDIHPAIKKLVYCDIQLTKHIINQNTYPVFNDSSQVKCCHYFDINSDNSNISSRTVEIFESEKSSLVSYIKTTNKKRKVNYGEIKKTVHGGTNANYFSGKKSDEYLSTTVRSNINQPWIKTISKRMRVDIINHSIVTRGKSSILQTIEIIFTNRTCVKIFKDSTMHIILSKDKDEKGCINMIDKLFYVYYNLFLLFEDIIQNEYFKEVANVVNHVLMATALDEKLFLIKKMAEHDVYGVSNFKIGMFNLTFIKSLDHTVFPSLLDEDSKIKFFKGKKLNIVALRSLEDCTNYVTKSENMIEMMKERSTILNSIDIETESVDRLKELLLK.

The protein belongs to the poxviruses A23 family. In terms of assembly, heterodimer of a 45 kDa and a 32 kDa subunit.

Functionally, acts with RNA polymerase to initiate transcription from intermediate gene promoters. This is Intermediate transcription factor 3 large subunit (VITF3L) from Monkeypox virus (strain Zaire-96-I-16) (MPX).